A 31-amino-acid chain; its full sequence is Cyclotide vpub-A (31 aa).

A cross-link (cyclopeptide (Gly-Asn)) is located at residues 1 to 31 (GVIPCGESCVFIPCISAVIGCSCKSKVCYRN). Intrachain disulfides connect cysteine 5–cysteine 21, cysteine 9–cysteine 23, and cysteine 14–cysteine 28.

Belongs to the cyclotide family. Bracelet subfamily. In terms of processing, this is a cyclic peptide.

Its function is as follows. Probably participates in a plant defense mechanism. This chain is Cyclotide vpub-A, found in Viola pubescens (Downy yellow violet).